A 60-amino-acid polypeptide reads, in one-letter code: UPF0337 protein SACOL1680 (60 aa).

It belongs to the UPF0337 (CsbD) family.

The polypeptide is UPF0337 protein SACOL1680 (Staphylococcus aureus (strain COL)).